The primary structure comprises 373 residues: tRNA pseudouridine synthase Pus10 (373 aa).

The active-site Nucleophile is the Asp-197. Residues Tyr-265 and Tyr-336 each coordinate substrate.

It belongs to the pseudouridine synthase Pus10 family.

It catalyses the reaction uridine(54) in tRNA = pseudouridine(54) in tRNA. The catalysed reaction is uridine(55) in tRNA = pseudouridine(55) in tRNA. Responsible for synthesis of pseudouridine from uracil-54 and uracil-55 in the psi GC loop of transfer RNAs. This Korarchaeum cryptofilum (strain OPF8) protein is tRNA pseudouridine synthase Pus10.